Reading from the N-terminus, the 471-residue chain is Uronate isomerase (471 aa).

It belongs to the metallo-dependent hydrolases superfamily. Uronate isomerase family.

It carries out the reaction D-glucuronate = D-fructuronate. It catalyses the reaction aldehydo-D-galacturonate = keto-D-tagaturonate. The protein operates within carbohydrate metabolism; pentose and glucuronate interconversion. In Xanthomonas campestris pv. campestris (strain 8004), this protein is Uronate isomerase.